The chain runs to 232 residues: Ribosomal RNA large subunit methyltransferase E (232 aa).

G64, W66, D97, D113, and D138 together coordinate S-adenosyl-L-methionine. The active-site Proton acceptor is the K178.

This sequence belongs to the class I-like SAM-binding methyltransferase superfamily. RNA methyltransferase RlmE family.

The protein resides in the cytoplasm. It catalyses the reaction uridine(2552) in 23S rRNA + S-adenosyl-L-methionine = 2'-O-methyluridine(2552) in 23S rRNA + S-adenosyl-L-homocysteine + H(+). Its function is as follows. Specifically methylates the uridine in position 2552 of 23S rRNA at the 2'-O position of the ribose in the fully assembled 50S ribosomal subunit. The chain is Ribosomal RNA large subunit methyltransferase E from Leptothrix cholodnii (strain ATCC 51168 / LMG 8142 / SP-6) (Leptothrix discophora (strain SP-6)).